The sequence spans 431 residues: Trigger factor (431 aa).

Residues 158-243 (GYLVALETWS…VIEVSEPVLL (86 aa)) enclose the PPIase FKBP-type domain.

Belongs to the FKBP-type PPIase family. Tig subfamily.

The protein localises to the cytoplasm. The catalysed reaction is [protein]-peptidylproline (omega=180) = [protein]-peptidylproline (omega=0). In terms of biological role, involved in protein export. Acts as a chaperone by maintaining the newly synthesized protein in an open conformation. Functions as a peptidyl-prolyl cis-trans isomerase. The chain is Trigger factor from Xylella fastidiosa (strain M23).